Reading from the N-terminus, the 503-residue chain is ATP synthase subunit alpha (503 aa).

169-176 (GDRKTGKT) lines the ATP pocket.

This sequence belongs to the ATPase alpha/beta chains family. As to quaternary structure, F-type ATPases have 2 components, CF(1) - the catalytic core - and CF(0) - the membrane proton channel. CF(1) has five subunits: alpha(3), beta(3), gamma(1), delta(1), epsilon(1). CF(0) has three main subunits: a(1), b(2) and c(9-12). The alpha and beta chains form an alternating ring which encloses part of the gamma chain. CF(1) is attached to CF(0) by a central stalk formed by the gamma and epsilon chains, while a peripheral stalk is formed by the delta and b chains.

It is found in the cell membrane. It carries out the reaction ATP + H2O + 4 H(+)(in) = ADP + phosphate + 5 H(+)(out). Functionally, produces ATP from ADP in the presence of a proton gradient across the membrane. The alpha chain is a regulatory subunit. This chain is ATP synthase subunit alpha, found in Lactobacillus helveticus (strain DPC 4571).